A 102-amino-acid chain; its full sequence is C-X-C motif chemokine 10 (102 aa).

A signal peptide spans 1–19 (MNKSGFLIFCLILLTLSQG). Arg-24 is modified (citrulline). 2 cysteine pairs are disulfide-bonded: Cys-28–Cys-55 and Cys-30–Cys-72.

The protein belongs to the intercrine alpha (chemokine CxC) family. As to quaternary structure, monomer, dimer, and tetramer. Interacts with CXCR3 (via N-terminus).

The protein localises to the secreted. Pro-inflammatory cytokine that is involved in a wide variety of processes such as chemotaxis, differentiation, and activation of peripheral immune cells, regulation of cell growth, apoptosis and modulation of angiostatic effects. Plays thereby an important role during viral infections by stimulating the activation and migration of immune cells to the infected sites. Mechanistically, binding of CXCL10 to the CXCR3 receptor activates G protein-mediated signaling and results in downstream activation of phospholipase C-dependent pathway, an increase in intracellular calcium production and actin reorganization. In turn, recruitment of activated Th1 lymphocytes occurs at sites of inflammation. Activation of the CXCL10/CXCR3 axis also plays an important role in neurons in response to brain injury for activating microglia, the resident macrophage population of the central nervous system, and directing them to the lesion site. This recruitment is an essential element for neuronal reorganization. The chain is C-X-C motif chemokine 10 (CXCL10) from Bos taurus (Bovine).